We begin with the raw amino-acid sequence, 354 residues long: Putative [LysW]-L-2-aminoadipate/[LysW]-L-glutamate phosphate reductase (354 aa).

Residues 10-13 (SGVI) and 34-36 (SRR) contribute to the NADP(+) site. The active site involves Cys153. Asn321 serves as a coordination point for NADP(+).

This sequence belongs to the NAGSA dehydrogenase family. Type 1 subfamily. LysY sub-subfamily.

The protein resides in the cytoplasm. The enzyme catalyses [amino-group carrier protein]-C-terminal-N-(1-carboxy-5-oxopentan-1-yl)-L-glutamine + phosphate + NADP(+) = [amino-group carrier protein]-C-terminal-N-(1-carboxy-5-phosphooxy-5-oxopentan-1-yl)-L-glutamine + NADPH + H(+). It carries out the reaction [amino-group carrier protein]-C-terminal-gamma-(L-glutamyl-5-semialdehyde)-L-glutamate + phosphate + NADP(+) = [amino-group carrier protein]-C-terminal-gamma-(5-phospho-L-glutamyl)-L-glutamate + NADPH + H(+). It functions in the pathway amino-acid biosynthesis; L-lysine biosynthesis via AAA pathway; L-lysine from L-alpha-aminoadipate (Thermus route): step 3/5. It participates in amino-acid biosynthesis; L-arginine biosynthesis. In terms of biological role, involved in both the arginine and lysine biosynthetic pathways. This chain is Putative [LysW]-L-2-aminoadipate/[LysW]-L-glutamate phosphate reductase, found in Caldivirga maquilingensis (strain ATCC 700844 / DSM 13496 / JCM 10307 / IC-167).